The sequence spans 211 residues: SAGA-associated factor 11 homolog (211 aa).

The SGF11-type zinc-finger motif lies at 115 to 136 (CTCPHCDRLVAAARFAPHLEKC). The tract at residues 153–211 (TKEGASASSSSTSTYIQSGGNTGGTDDEDDVDWSSDKRKKKSTQNSRNNGSKKNNGKIF) is disordered. A compositionally biased stretch (low complexity) spans 157–166 (ASASSSSTST). Ser187 carries the phosphoserine modification. A compositionally biased stretch (low complexity) spans 197 to 211 (NSRNNGSKKNNGKIF).

It belongs to the SGF11 family. In terms of assembly, component of some SAGA transcription coactivator-HAT complexes, at least composed of Ada2b, not/nonstop, Pcaf/Gcn5, Sgf11 and Spt3. Within the SAGA complex, Sgf11, e(y)2, and not/nonstop form an additional subcomplex of SAGA called the DUB module (deubiquitination module). Interacts directly with not/nonstop. Interacts with the AMEX complex component xmas-2. Interacts with Cbp80; important for promoter recruitment of Sgf11 that is not associated with the DUB module.

It is found in the nucleus. Its subcellular location is the nucleoplasm. The protein localises to the cytoplasm. In terms of biological role, component of the transcription regulatory histone acetylation (HAT) complex SAGA, a multiprotein complex that activates transcription by remodeling chromatin and mediating histone acetylation and deubiquitination. Within the SAGA complex, participates in a subcomplex that specifically deubiquitinates histone H2B. The SAGA complex is recruited to specific gene promoters by activators, where it is required for transcription. Required for nuclear receptor-mediated transactivation. Binds independently on SAGA to promoters in an RNA-dependent manner. Binds to mRNA and is essential for total mRNA export from the nucleus. Required to counteract heterochromatin silencing. Controls the development of neuronal connectivity in visual system by being required for accurate axon targeting in the optic lobe. Required for expression of ecdysone-induced genes such as br/broad. The chain is SAGA-associated factor 11 homolog from Drosophila mojavensis (Fruit fly).